Reading from the N-terminus, the 133-residue chain is MNYDNYWDEDKPELNITPLVDVMLVLLAILMVTTPTLTYKEEIALPSGSKTARATQDKVIEIRMDKDAKIYIDSQTYEYNSFPDTFNLLSKKYDKDTRVSIRADKRLTYDKVIYLLKTIKEAGFLKVSLITSP.

The Cytoplasmic segment spans residues 1–15 (MNYDNYWDEDKPELN). A helical transmembrane segment spans residues 16–32 (ITPLVDVMLVLLAILMV). Residues 33-133 (TTPTLTYKEE…FLKVSLITSP (101 aa)) lie on the Periplasmic side of the membrane.

It belongs to the ExbD/TolR family.

The protein resides in the cell inner membrane. The polypeptide is Putative biopolymer transport protein ExbD-like 1 (Helicobacter pylori (strain J99 / ATCC 700824) (Campylobacter pylori J99)).